The following is a 243-amino-acid chain: UPF0502 protein Rmet_3697 (243 aa).

The span at Met-1–Pro-11 shows a compositional bias: low complexity. Positions Met-1 to Arg-23 are disordered.

The protein belongs to the UPF0502 family.

This chain is UPF0502 protein Rmet_3697, found in Cupriavidus metallidurans (strain ATCC 43123 / DSM 2839 / NBRC 102507 / CH34) (Ralstonia metallidurans).